Here is a 403-residue protein sequence, read N- to C-terminus: Histidine decarboxylase (403 aa).

His-120 is a binding site for substrate. An N6-(pyridoxal phosphate)lysine modification is found at Lys-233.

This sequence belongs to the group II decarboxylase family. As to quaternary structure, homotetramer. Requires pyridoxal 5'-phosphate as cofactor.

The enzyme catalyses L-histidine + H(+) = histamine + CO2. The sequence is that of Histidine decarboxylase from Pseudomonas entomophila (strain L48).